A 617-amino-acid polypeptide reads, in one-letter code: Manganese lipoxygenase (617 aa).

Positions 1-17 (MRIGLLAFAVAARYVEA) are cleaved as a signal peptide. Over residues 23-48 (GEEVASSSAPTTLPSTSSSSALPSPT) the composition is skewed to low complexity. A disordered region spans residues 23–59 (GEEVASSSAPTTLPSTSSSSALPSPTKYTLPHEDPNP). 3 N-linked (GlcNAc...) asparagine glycosylation sites follow: N109, N119, and N160. A Lipoxygenase domain is found at 122–617 (LRDIQSHGGL…PAVNPFFLSI (496 aa)). H293, H297, H479, and N483 together coordinate Mn(2+). N547 carries N-linked (GlcNAc...) asparagine glycosylation. I617 provides a ligand contact to Mn(2+).

The protein belongs to the lipoxygenase family. Manganese lipoxygenase subfamily. The cofactor is Mn(2+).

Its subcellular location is the secreted. It catalyses the reaction (9Z,12Z)-octadecadienoate + O2 = (9S)-hydroperoxy-(10E,12Z)-octadecadienoate. It carries out the reaction (9Z,12Z)-octadecadienoate + O2 = (11S)-hydroperoxy-(9Z,12Z)-octadecadienoate. The catalysed reaction is (9Z,12Z)-octadecadienoate + O2 = (13R)-hydroperoxy-(9Z,11E)-octadecadienoate. The enzyme catalyses (9Z,12Z,15Z)-octadecatrienoate + O2 = (9S)-hydroperoxy-(10E,12Z,15Z)-octadecatrienoate. It catalyses the reaction (9Z,12Z,15Z)-octadecatrienoate + O2 = (11R)-hydroperoxy-(9Z,12Z,15Z)-octadecatrienoate. It carries out the reaction (9Z,12Z,15Z)-octadecatrienoate + O2 = (13R)-hydroperoxy-(9Z,11E,15Z)-octadecatrienoate. Lipoxygenase that metabolizes linoleic and alpha-linolenic acids to 9S-, 11- and 13R-hydroperoxy fatty acids. At the end of lipoxygenation, the intermediate products 11S-HPODE and 13R-HPODE from linoleic acid are then transformed into 9S-HPODE as the final product. The intermediate product 11R-HPOTrE from alpha-linolenic acid is transformed into 9S-HPOTrE and 13R-HPOTrE as the final products. 9S-HPOTrE is further oxidized by the enzyme to 9,16-DiHOTrE as the end product. Also acts on gamma-linolenic acid producing 9-HOTrE(n-6) as the main metabolite. This Nakataea oryzae (Rice stem rot fungus) protein is Manganese lipoxygenase.